Here is a 129-residue protein sequence, read N- to C-terminus: Small ribosomal subunit protein uS11 (129 aa).

This sequence belongs to the universal ribosomal protein uS11 family. In terms of assembly, part of the 30S ribosomal subunit. Interacts with proteins S7 and S18. Binds to IF-3.

Functionally, located on the platform of the 30S subunit, it bridges several disparate RNA helices of the 16S rRNA. Forms part of the Shine-Dalgarno cleft in the 70S ribosome. The protein is Small ribosomal subunit protein uS11 of Baumannia cicadellinicola subsp. Homalodisca coagulata.